Consider the following 101-residue polypeptide: uncharacterized protein (101 aa).

The chain crosses the membrane as a helical span at residues 77–99; that stretch reads VFSFMNGFTDGCICGTIIILCLI.

Its subcellular location is the membrane. This is an uncharacterized protein from Acanthamoeba polyphaga mimivirus (APMV).